The primary structure comprises 374 residues: Histone acetyltransferase type B catalytic subunit (374 aa).

Interaction with histone H4 N-terminus stretches follow at residues 42–44 and 194–196; these read DSE and YKY. The 169-residue stretch at 135–303 folds into the N-acetyltransferase domain; that stretch reads VVYKSSLVDD…ESSRKSLKLE (169 aa). Residues 197–205 are interaction with HAT2; sequence WHYLGAKSF. Acetyl-CoA contacts are provided by residues 220–222 and 227–233; these read FLI and QNKGHGS. The active-site Proton donor/acceptor is the Glu255. Acetyl-CoA is bound by residues Asn258 and Arg267. Residue Ser354 is modified to Phosphoserine.

The protein belongs to the HAT1 family. As to quaternary structure, component of the HAT-B complex composed of at least HAT1 and HAT2. In the cytoplasm, this complex binds to the histone H4 tail. In the nucleus, the HAT-B complex has an additional component, the histone H3/H4 chaperone HIF1.

Its subcellular location is the cytoplasm. It localises to the nucleus. The catalysed reaction is L-lysyl-[protein] + acetyl-CoA = N(6)-acetyl-L-lysyl-[protein] + CoA + H(+). In terms of biological role, catalytic component of the histone acetylase B (HAT-B) complex. Acetylates 'Lys-12' of free histone H4 in the cytoplasm. The complex is also found in the nucleus, however it is not certain that it modifies histone H4 when packaged in chromatin. Histone H4 'Lys-12' acetylation is required for telomeric silencing. Has intrinsic substrate specificity that modifies lysine in recognition sequence GXGKXG. Involved in DNA double-strand break repair. The chain is Histone acetyltransferase type B catalytic subunit (HAT1) from Saccharomyces cerevisiae (strain ATCC 204508 / S288c) (Baker's yeast).